Reading from the N-terminus, the 313-residue chain is 4-diphosphocytidyl-2-C-methyl-D-erythritol kinase (313 aa).

Lys-27 is an active-site residue. 110 to 120 (PIGGGVGGGSS) lines the ATP pocket. Asp-152 is an active-site residue.

This sequence belongs to the GHMP kinase family. IspE subfamily.

It catalyses the reaction 4-CDP-2-C-methyl-D-erythritol + ATP = 4-CDP-2-C-methyl-D-erythritol 2-phosphate + ADP + H(+). The protein operates within isoprenoid biosynthesis; isopentenyl diphosphate biosynthesis via DXP pathway; isopentenyl diphosphate from 1-deoxy-D-xylulose 5-phosphate: step 3/6. Functionally, catalyzes the phosphorylation of the position 2 hydroxy group of 4-diphosphocytidyl-2C-methyl-D-erythritol. The polypeptide is 4-diphosphocytidyl-2-C-methyl-D-erythritol kinase (Histophilus somni (strain 129Pt) (Haemophilus somnus)).